Reading from the N-terminus, the 482-residue chain is Catalase easC (482 aa).

Residue H58 is part of the active site. Heme is bound at residue Y347.

Belongs to the catalase family. Heme is required as a cofactor.

The protein operates within alkaloid biosynthesis; ergot alkaloid biosynthesis. Catalase; part of the gene cluster that mediates the biosynthesis of fungal ergot alkaloid. DmaW catalyzes the first step of ergot alkaloid biosynthesis by condensing dimethylallyl diphosphate (DMAP) and tryptophan to form 4-dimethylallyl-L-tryptophan. The second step is catalyzed by the methyltransferase easF that methylates 4-dimethylallyl-L-tryptophan in the presence of S-adenosyl-L-methionine, resulting in the formation of 4-dimethylallyl-L-abrine. The catalase easC and the FAD-dependent oxidoreductase easE then transform 4-dimethylallyl-L-abrine to chanoclavine-I which is further oxidized by easD in the presence of NAD(+), resulting in the formation of chanoclavine-I aldehyde. Chanoclavine-I aldehyde is the precursor of ergoamides and ergopeptines in Clavicipitaceae, and clavine-type alcaloids such as fumiclavine in Trichocomaceae. However, the metabolites downstream of chanoclavine-I aldehyde in Arthrodermataceae have not been identified yet. The chain is Catalase easC from Arthroderma otae (strain ATCC MYA-4605 / CBS 113480) (Microsporum canis).